Consider the following 922-residue polypeptide: Phosphoenolpyruvate carboxylase (922 aa).

Residues 1-20 are disordered; the sequence is MTKTLHARPSAATDTTFAPP. Active-site residues include His142 and Lys581.

Belongs to the PEPCase type 1 family. The cofactor is Mg(2+).

It carries out the reaction oxaloacetate + phosphate = phosphoenolpyruvate + hydrogencarbonate. Its function is as follows. Forms oxaloacetate, a four-carbon dicarboxylic acid source for the tricarboxylic acid cycle. In Methylorubrum extorquens (strain ATCC 14718 / DSM 1338 / JCM 2805 / NCIMB 9133 / AM1) (Methylobacterium extorquens), this protein is Phosphoenolpyruvate carboxylase (ppc).